We begin with the raw amino-acid sequence, 319 residues long: Acetyl-coenzyme A carboxylase carboxyl transferase subunit beta, chloroplastic (319 aa).

The 273-residue stretch at 47–319 (LWVQCDNCES…ELFYVLQSSS (273 aa)) folds into the CoA carboxyltransferase N-terminal domain. 4 residues coordinate Zn(2+): cysteine 51, cysteine 54, cysteine 70, and cysteine 73. The C4-type zinc-finger motif lies at 51–73 (CDNCESLLYIRFLRENKSVCEEC).

Belongs to the AccD/PCCB family. Acetyl-CoA carboxylase is a heterohexamer composed of biotin carboxyl carrier protein, biotin carboxylase and 2 subunits each of ACCase subunit alpha and ACCase plastid-coded subunit beta (accD). Zn(2+) serves as cofactor.

It localises to the plastid. Its subcellular location is the chloroplast stroma. It carries out the reaction N(6)-carboxybiotinyl-L-lysyl-[protein] + acetyl-CoA = N(6)-biotinyl-L-lysyl-[protein] + malonyl-CoA. Its pathway is lipid metabolism; malonyl-CoA biosynthesis; malonyl-CoA from acetyl-CoA: step 1/1. In terms of biological role, component of the acetyl coenzyme A carboxylase (ACC) complex. Biotin carboxylase (BC) catalyzes the carboxylation of biotin on its carrier protein (BCCP) and then the CO(2) group is transferred by the transcarboxylase to acetyl-CoA to form malonyl-CoA. The chain is Acetyl-coenzyme A carboxylase carboxyl transferase subunit beta, chloroplastic from Picea abies (Norway spruce).